We begin with the raw amino-acid sequence, 137 residues long: Large ribosomal subunit protein uL16 (137 aa).

The protein belongs to the universal ribosomal protein uL16 family. Part of the 50S ribosomal subunit.

In terms of biological role, binds 23S rRNA and is also seen to make contacts with the A and possibly P site tRNAs. The protein is Large ribosomal subunit protein uL16 of Azotobacter vinelandii (strain DJ / ATCC BAA-1303).